We begin with the raw amino-acid sequence, 142 residues long: Peptide methionine sulfoxide reductase MsrB (142 aa).

The region spanning 2–125 (LKKDKSELTD…NSAAIQFIPY (124 aa)) is the MsrB domain. Residue Cys114 is the Nucleophile of the active site.

The protein belongs to the MsrB Met sulfoxide reductase family.

The catalysed reaction is L-methionyl-[protein] + [thioredoxin]-disulfide + H2O = L-methionyl-(R)-S-oxide-[protein] + [thioredoxin]-dithiol. The sequence is that of Peptide methionine sulfoxide reductase MsrB from Staphylococcus aureus (strain Mu3 / ATCC 700698).